A 65-amino-acid chain; its full sequence is Large ribosomal subunit protein uL29 (65 aa).

This sequence belongs to the universal ribosomal protein uL29 family.

This is Large ribosomal subunit protein uL29 from Dehalococcoides mccartyi (strain ATCC BAA-2100 / JCM 16839 / KCTC 5957 / BAV1).